Consider the following 309-residue polypeptide: Low density lipoprotein receptor adapter protein 1-A (309 aa).

The 155-residue stretch at 41 to 195 (LLEGMLFHLK…SGGEGASSSQ (155 aa)) folds into the PID domain. The interval 179 to 199 (EKREKSGSGGEGASSSQSDGS) is disordered. A Clathrin box motif is present at residues 213–217 (LLDLE). The tract at residues 250 to 277 (WELDDGLDEAFARLAESRTNPQVLDIGL) is AP-2 complex binding. Positions 258-267 (EAFARLAESR) match the [DE]-X(1,2)-F-X-X-[FL]-X-X-X-R motif motif.

Interacts (via PID domain) with ldlr (via NPXY motif). Binds to soluble clathrin trimers and to the adapter protein complex 2 (AP-2, beta 2 subunit). Binds to phosphoinositides, which regulate clathrin bud assembly at the cell surface. Interacts with the VLDL receptor (vldlr). Interacts with the vitellogenin receptor. In terms of tissue distribution, expressed at high level during oogenesis and embryogenesis. Found in the oocyte vegetal cortex. Found at low level in the adult liver and spleen. Found at very low level in testis and heart.

It is found in the cytoplasm. Functionally, adapter protein (clathrin-associated sorting protein (CLASP)) required for efficient endocytosis of the LDL receptor (LDLR). Also involved in the vitellogenin receptor mediated endocytosis of nutrients during oogenesis. This chain is Low density lipoprotein receptor adapter protein 1-A, found in Xenopus laevis (African clawed frog).